Here is a 312-residue protein sequence, read N- to C-terminus: Dihydroorotate dehydrogenase B (NAD(+)), catalytic subunit (312 aa).

FMN-binding positions include serine 23 and 47–48; that span reads KA. Substrate-binding positions include lysine 47 and 71–75; that span reads NAIGL. FMN-binding residues include asparagine 103 and asparagine 131. Asparagine 131 serves as a coordination point for substrate. The Nucleophile role is filled by cysteine 134. Positions 171 and 197 each coordinate FMN. 198–199 provides a ligand contact to substrate; it reads NT. Residues glycine 223, 249 to 250, and 271 to 272 contribute to the FMN site; these read GG and GT.

The protein belongs to the dihydroorotate dehydrogenase family. Type 1 subfamily. Heterotetramer of 2 PyrK and 2 PyrD type B subunits. Requires FMN as cofactor.

The protein resides in the cytoplasm. It catalyses the reaction (S)-dihydroorotate + NAD(+) = orotate + NADH + H(+). The protein operates within pyrimidine metabolism; UMP biosynthesis via de novo pathway; orotate from (S)-dihydroorotate (NAD(+) route): step 1/1. Its function is as follows. Catalyzes the conversion of dihydroorotate to orotate with NAD(+) as electron acceptor. The protein is Dihydroorotate dehydrogenase B (NAD(+)), catalytic subunit (pyrDB) of Streptococcus pneumoniae (strain ATCC BAA-255 / R6).